A 481-amino-acid chain; its full sequence is 4-hydroxyphenylacetate 3-monooxygenase oxygenase component (481 aa).

Substrate contacts are provided by residues 100-104 and His-142; that span reads RSPDY. FAD-binding positions include 142-144, 148-151, and Thr-185; these read HAL and QVNR. 197 to 198 is a substrate binding site; it reads ST. Residue 444–447 coordinates FAD; that stretch reads DPVR.

It belongs to the FADH(2)-utilizing monooxygenase family. Homotetramer consisting of a dimer of dimers. 4-HPA 3-monooxygenase consists of a reductase component HpaC and an oxygenase component HpaB.

The enzyme catalyses 4-hydroxyphenylacetate + FADH2 + O2 = 3,4-dihydroxyphenylacetate + FAD + H2O + H(+). It participates in aromatic compound metabolism; 4-hydroxyphenylacetate degradation; pyruvate and succinate semialdehyde from 4-hydroxyphenylacetate: step 1/7. In terms of biological role, utilizes FADH(2) supplied by HpaC, to catalyze the hydroxylation of 4-hydroxyphenylacetic acid, leading to the production of 3,4-dihydroxyphenylacetic acid (DHPA). This is 4-hydroxyphenylacetate 3-monooxygenase oxygenase component from Thermus thermophilus (strain ATCC 27634 / DSM 579 / HB8).